The chain runs to 131 residues: UPF0212 protein TK1194 (131 aa).

This sequence belongs to the UPF0212 family.

This chain is UPF0212 protein TK1194, found in Thermococcus kodakarensis (strain ATCC BAA-918 / JCM 12380 / KOD1) (Pyrococcus kodakaraensis (strain KOD1)).